The chain runs to 258 residues: UPF0758 protein Bamb_2548 (258 aa).

The disordered stretch occupies residues Met-1 to His-43. A compositionally biased stretch (basic residues) spans Arg-31–His-43. Residues Gln-136–Leu-258 enclose the MPN domain. His-207, His-209, and Asp-220 together coordinate Zn(2+). The short motif at His-207–Asp-220 is the JAMM motif element.

This sequence belongs to the UPF0758 family.

The chain is UPF0758 protein Bamb_2548 from Burkholderia ambifaria (strain ATCC BAA-244 / DSM 16087 / CCUG 44356 / LMG 19182 / AMMD) (Burkholderia cepacia (strain AMMD)).